A 60-amino-acid polypeptide reads, in one-letter code: Metallothionein (60 aa).

The tract at residues 1–28 (MDPCECSKGGTCNCGGSCTCTNCSCTTC) is beta. Residues C4, C6, C12, C14, C18, C20, C23, C25, C28, C32, C33, C35, C36, C40, C43, C47, C49, C54, C58, and C59 each coordinate a divalent metal cation. Positions 29–60 (KKSCCPCCPSGCPKCASGCVCKGKTCDAACCQ) are alpha.

This sequence belongs to the metallothionein superfamily. Type 1 family.

Its function is as follows. Metallothioneins have a high content of cysteine residues that bind various heavy metals. The sequence is that of Metallothionein (mt) from Perca fluviatilis (European perch).